The primary structure comprises 306 residues: Aspartate carbamoyltransferase catalytic subunit (306 aa).

Positions 49 and 50 each coordinate carbamoyl phosphate. K77 is a binding site for L-aspartate. Carbamoyl phosphate contacts are provided by R99, H127, and Q130. R160 and R211 together coordinate L-aspartate. Carbamoyl phosphate-binding residues include A250 and P251.

It belongs to the aspartate/ornithine carbamoyltransferase superfamily. ATCase family. As to quaternary structure, heterododecamer (2C3:3R2) of six catalytic PyrB chains organized as two trimers (C3), and six regulatory PyrI chains organized as three dimers (R2).

It catalyses the reaction carbamoyl phosphate + L-aspartate = N-carbamoyl-L-aspartate + phosphate + H(+). Its pathway is pyrimidine metabolism; UMP biosynthesis via de novo pathway; (S)-dihydroorotate from bicarbonate: step 2/3. Its function is as follows. Catalyzes the condensation of carbamoyl phosphate and aspartate to form carbamoyl aspartate and inorganic phosphate, the committed step in the de novo pyrimidine nucleotide biosynthesis pathway. The polypeptide is Aspartate carbamoyltransferase catalytic subunit (Bacillus licheniformis (strain ATCC 14580 / DSM 13 / JCM 2505 / CCUG 7422 / NBRC 12200 / NCIMB 9375 / NCTC 10341 / NRRL NRS-1264 / Gibson 46)).